The sequence spans 242 residues: Orotidine 5'-phosphate decarboxylase (242 aa).

Residues aspartate 21, lysine 43, 71–80 (DLKFFDVPET), threonine 124, arginine 185, glutamine 195, glycine 215, and arginine 216 each bind substrate. Lysine 73 functions as the Proton donor in the catalytic mechanism.

The protein belongs to the OMP decarboxylase family. Type 1 subfamily. Homodimer.

It carries out the reaction orotidine 5'-phosphate + H(+) = UMP + CO2. It functions in the pathway pyrimidine metabolism; UMP biosynthesis via de novo pathway; UMP from orotate: step 2/2. Its function is as follows. Catalyzes the decarboxylation of orotidine 5'-monophosphate (OMP) to uridine 5'-monophosphate (UMP). In Methylococcus capsulatus (strain ATCC 33009 / NCIMB 11132 / Bath), this protein is Orotidine 5'-phosphate decarboxylase.